The sequence spans 153 residues: Ribonuclease H (153 aa).

Residues 1 to 142 (MRKKIEIFTD…CDELARIAAE (142 aa)) form the RNase H type-1 domain. Mg(2+) contacts are provided by Asp-10, Glu-48, Asp-70, and Asp-134.

It belongs to the RNase H family. In terms of assembly, monomer. Requires Mg(2+) as cofactor.

The protein localises to the cytoplasm. It catalyses the reaction Endonucleolytic cleavage to 5'-phosphomonoester.. Endonuclease that specifically degrades the RNA of RNA-DNA hybrids. The polypeptide is Ribonuclease H (Baumannia cicadellinicola subsp. Homalodisca coagulata).